The following is a 175-amino-acid chain: uncharacterized protein (175 aa).

Residues 71-166 (QPKPTYNVSF…KPPQFKIRPA (96 aa)) form a DNL-type zinc finger. Zn(2+) contacts are provided by Cys82, Cys85, Cys107, and Cys110.

This is an uncharacterized protein from Schizosaccharomyces pombe (strain 972 / ATCC 24843) (Fission yeast).